The chain runs to 713 residues: Vacuolar amino acid transporter 4 (713 aa).

Residues 1 to 33 (MVTNNGDGEHLGIRRNGNLRHPSNNMKIPRRAQ) are disordered. The Vacuolar portion of the chain corresponds to 1 to 242 (MVTNNGDGEH…IDKVPFLTRN (242 aa)). Residues 21–33 (HPSNNMKIPRRAQ) are compositionally biased toward polar residues. Serine 88 is modified (phosphoserine). The disordered stretch occupies residues 99-121 (RSSVSHGNEAIPRVNPTKNSSAS). 2 positions are modified to phosphoserine: serine 130 and serine 165. Residues 200–233 (KRQEHQLNDSASSDFTSHESDSINQSSPSSNQDI) form a disordered region. A compositionally biased stretch (low complexity) spans 221–231 (SINQSSPSSNQ). The chain crosses the membrane as a helical span at residues 243 to 263 (FLEFLYVFGHFAGESFEDDFI). Topologically, residues 264-301 (PDSSNMMIRGEDERSALLSRPDHMKVLPSAKGTTSTKK) are cytoplasmic. The helical transmembrane segment at 302-322 (VFLILLKSFIGTGVLFLPNAF) threads the bilayer. The Vacuolar portion of the chain corresponds to 323–326 (HNGG). Residues 327–347 (LFFSVSMLAFFGIYSYWCYYI) form a helical membrane-spanning segment. Residues 348–373 (LVQAKSSCGVSSFGDIGLKLYGPWMR) are Cytoplasmic-facing. Residues 374–394 (IIILFSLVITQVGFSGAYMIF) form a helical membrane-spanning segment. Residues 395–410 (TAKNLQAFLDNVFHVG) are Vacuolar-facing. Residues 411–431 (VLPLSYLMVFQTIIFIPLSFI) traverse the membrane as a helical segment. The Cytoplasmic segment spans residues 432 to 438 (RNISKLS). The helical transmembrane segment at 439–459 (LPSLLANFFIMAGLVIVIIFT) threads the bilayer. Residues 460–483 (AKRLFFDLMGTPAMGVVYGLNADR) lie on the Vacuolar side of the membrane. Residues 484 to 504 (WTLFIGTAIFAFEGIGLIIPV) traverse the membrane as a helical segment. Topologically, residues 505-515 (QDSMRNPEKFP) are cytoplasmic. Residues 516 to 536 (LVLALVILTATILFISIATLG) traverse the membrane as a helical segment. Residues 537–561 (YLAYGSNVQTVILLNLPQSNIFVNL) lie on the Vacuolar side of the membrane. A helical membrane pass occupies residues 562–582 (IQLFYSIAIMLSTPLQLFPAI). Residues 583 to 621 (KIIENKFFPKFTKIYVKHDDLTTRVELRPNSGKLNWKIK) lie on the Cytoplasmic side of the membrane. The helical transmembrane segment at 622–642 (WLKNFIRSIIVIIVVSIAYFG) threads the bilayer. At 643–648 (SDNLDK) the chain is on the vacuolar side. Residues 649–669 (FVSVIGSLACIPLVYIYPSML) traverse the membrane as a helical segment. The Cytoplasmic portion of the chain corresponds to 670-692 (HLRGNSLPETKGEFWRFKPMLDT). The helical transmembrane segment at 693-711 (ILIFFGIASMLYTSYQSIF) threads the bilayer. Topologically, residues 712–713 (GV) are vacuolar.

It belongs to the amino acid/polyamine transporter 2 family.

Its subcellular location is the vacuole membrane. Functionally, involved in amino acid efflux from the vacuole to the cytoplasm. Capable of transporting large neutral amino acids including tyrosine, glutamine, asparagine, isoleucine and leucine. The sequence is that of Vacuolar amino acid transporter 4 (AVT4) from Saccharomyces cerevisiae (strain ATCC 204508 / S288c) (Baker's yeast).